We begin with the raw amino-acid sequence, 436 residues long: GTPase Obg (436 aa).

The 159-residue stretch at 2–160 (SMFLDTAKIK…RELQLELKIL (159 aa)) folds into the Obg domain. The OBG-type G domain occupies 161–338 (ADVGLVGFPS…LLDATAELLD (178 aa)). GTP is bound by residues 167–174 (GFPSVGKS), 192–196 (FTTIV), 214–217 (DLPG), 284–287 (NKMD), and 319–321 (SGL). Ser174 and Thr194 together coordinate Mg(2+). Residues 358–436 (GFDEEEKAFE…IGKFEFEFVD (79 aa)) enclose the OCT domain.

The protein belongs to the TRAFAC class OBG-HflX-like GTPase superfamily. OBG GTPase family. As to quaternary structure, monomer. Mg(2+) is required as a cofactor.

The protein resides in the cytoplasm. In terms of biological role, an essential GTPase which binds GTP, GDP and possibly (p)ppGpp with moderate affinity, with high nucleotide exchange rates and a fairly low GTP hydrolysis rate. Plays a role in control of the cell cycle, stress response, ribosome biogenesis and in those bacteria that undergo differentiation, in morphogenesis control. This chain is GTPase Obg, found in Streptococcus pneumoniae (strain CGSP14).